The following is a 246-amino-acid chain: 3'(2'),5'-bisphosphate nucleotidase CysQ (246 aa).

Mg(2+)-binding residues include E64, D83, L85, D86, and D205. Position 64 (E64) interacts with substrate. Residues 85 to 88 (LDGT) and D205 contribute to the substrate site.

Belongs to the inositol monophosphatase superfamily. CysQ family. It depends on Mg(2+) as a cofactor.

The protein localises to the cell inner membrane. The enzyme catalyses adenosine 3',5'-bisphosphate + H2O = AMP + phosphate. Converts adenosine-3',5'-bisphosphate (PAP) to AMP. The protein is 3'(2'),5'-bisphosphate nucleotidase CysQ of Shigella flexneri.